The primary structure comprises 733 residues: Protein ROG3 (733 aa).

The PY-motif motif lies at 460–463 (PPNY). The disordered stretch occupies residues 518–566 (RDNLGLPPSASSAAASRSLSPLLNVPAPEDGTERILPQSALGPNSGSVP). The span at 523 to 540 (LPPSASSAAASRSLSPLL) shows a compositional bias: low complexity. Residues 625–628 (PPSY) carry the PY-motif motif. 2 disordered regions span residues 636-658 (QPRKPSRVHSRNSSTTLSSSIPT) and 693-733 (ELTS…GNKR). The segment covering 646 to 658 (RNSSTTLSSSIPT) has biased composition (low complexity).

It belongs to the arrestin family. As to quaternary structure, interacts with RSP5 via its 2 PY-motifs.

Functionally, involved in resistance to GST substrate o-dinitrobenzene (o-DNB). The polypeptide is Protein ROG3 (ROG3) (Saccharomyces cerevisiae (strain ATCC 204508 / S288c) (Baker's yeast)).